The primary structure comprises 220 residues: UPF0319 protein CKO_02102 (220 aa).

The N-terminal stretch at 1–20 (MKTGIITMLFVLYLPVTAFA) is a signal peptide.

The protein belongs to the UPF0319 family.

This chain is UPF0319 protein CKO_02102, found in Citrobacter koseri (strain ATCC BAA-895 / CDC 4225-83 / SGSC4696).